Here is a 389-residue protein sequence, read N- to C-terminus: Abscission/NoCut checkpoint regulator (389 aa).

The FYVE-type zinc-finger motif lies at 1–58 (MESRCYGCAVKFTLFKKEYGCKNCGRAFCNGCLSFSALVPRAGNTQQKVCKQCHTILT). The Zn(2+) site is built by C5, C8, C21, C24, C29, C32, C50, and C53. Residue S69 is modified to Phosphoserine. An MIM1-A motif is present at residues 99–112 (DQAIAERLARLRQE). A Glycyl lysine isopeptide (Lys-Gly) (interchain with G-Cter in SUMO2) cross-link involves residue K132. 2 disordered regions span residues 158-177 (PSHTVRPAHQAPDTRTQAQQ) and 204-227 (QNDLNKGAARSQRTNSQGQASQSL). Residues 167–177 (QAPDTRTQAQQ) are compositionally biased toward low complexity. Residues 214 to 226 (SQRTNSQGQASQS) show a composition bias toward polar residues. A Phosphoserine modification is found at S219. The stretch at 226–261 (SLEEEKYKLLAEAAVELQEENTRQERILALAKRLAV) forms a coiled coil. The MIM1-B signature appears at 252-265 (ILALAKRLAVLKGQ). S280 carries the post-translational modification Phosphoserine.

As to quaternary structure, interacts (via MIM1-B) with VPS4A; interaction takes place at the midbody ring following cytokinesis checkpoint activation.

It localises to the cytoplasm. The protein resides in the cytoskeleton. The protein localises to the microtubule organizing center. It is found in the centrosome. Its subcellular location is the cleavage furrow. It localises to the midbody. The protein resides in the midbody ring. Functionally, key regulator of abscission step in cytokinesis: part of the cytokinesis checkpoint, a process required to delay abscission to prevent both premature resolution of intercellular chromosome bridges and accumulation of DNA damage. Together with CHMP4C, required to retain abscission-competent VPS4 (VPS4A and/or VPS4B) at the midbody ring until abscission checkpoint signaling is terminated at late cytokinesis. Deactivation of AURKB results in dephosphorylation of CHMP4C followed by its dissociation from ZFYVE19/ANCHR and VPS4 and subsequent abscission. In Mus musculus (Mouse), this protein is Abscission/NoCut checkpoint regulator (Zfyve19).